Reading from the N-terminus, the 258-residue chain is Putative cysteine-rich repeat secretory protein 16 (258 aa).

The signal sequence occupies residues 1-30 (MYYSSPTCFVLITIFAVVVTQLIFMRTVSS). Gnk2-homologous domains lie at 37–139 (YLNH…PFDT) and 144–247 (DKDN…LYPF).

The protein belongs to the cysteine-rich repeat secretory protein family.

The protein resides in the secreted. This Arabidopsis thaliana (Mouse-ear cress) protein is Putative cysteine-rich repeat secretory protein 16 (CRRSP16).